Here is a 465-residue protein sequence, read N- to C-terminus: Innexin-11 (465 aa).

The next 4 helical transmembrane spans lie at 29–49 (LMTP…QFGG), 105–125 (QWVP…SYLW), 195–215 (SGFI…NVFA), and 286–306 (IFVL…VSLV). The interval 433–465 (ISTSLMPDKDDIESSSTSSEEDQKRVSNVITNI) is disordered.

The protein belongs to the pannexin family.

It is found in the cell membrane. It localises to the cell junction. Its subcellular location is the gap junction. In terms of biological role, structural component of the gap junctions. The sequence is that of Innexin-11 (inx-11) from Caenorhabditis elegans.